Consider the following 146-residue polypeptide: Protein MGF 100-3L (146 aa).

This sequence belongs to the asfivirus MGF 100 family.

Functionally, plays a role in virus cell tropism, and may be required for efficient virus replication in macrophages. In Ornithodoros (relapsing fever ticks), this protein is Protein MGF 100-3L.